Reading from the N-terminus, the 284-residue chain is ATP phosphoribosyltransferase (284 aa).

Belongs to the ATP phosphoribosyltransferase family. Long subfamily. It depends on Mg(2+) as a cofactor.

It localises to the cytoplasm. It carries out the reaction 1-(5-phospho-beta-D-ribosyl)-ATP + diphosphate = 5-phospho-alpha-D-ribose 1-diphosphate + ATP. The protein operates within amino-acid biosynthesis; L-histidine biosynthesis; L-histidine from 5-phospho-alpha-D-ribose 1-diphosphate: step 1/9. Feedback inhibited by histidine. Catalyzes the condensation of ATP and 5-phosphoribose 1-diphosphate to form N'-(5'-phosphoribosyl)-ATP (PR-ATP). Has a crucial role in the pathway because the rate of histidine biosynthesis seems to be controlled primarily by regulation of HisG enzymatic activity. The protein is ATP phosphoribosyltransferase of Pseudarthrobacter chlorophenolicus (strain ATCC 700700 / DSM 12829 / CIP 107037 / JCM 12360 / KCTC 9906 / NCIMB 13794 / A6) (Arthrobacter chlorophenolicus).